The sequence spans 257 residues: UPF0246 protein RSKD131_2757 (257 aa).

The protein belongs to the UPF0246 family.

The protein is UPF0246 protein RSKD131_2757 of Cereibacter sphaeroides (strain KD131 / KCTC 12085) (Rhodobacter sphaeroides).